A 660-amino-acid polypeptide reads, in one-letter code: DNA ligase (660 aa).

NAD(+)-binding positions include 32-36 (DEVYD), 81-82 (SM), and Glu-112. The active-site N6-AMP-lysine intermediate is the Lys-114. The NAD(+) site is built by Arg-135, Glu-169, Lys-284, and Lys-308. Residues Cys-402, Cys-405, Cys-418, and Cys-423 each coordinate Zn(2+). The 83-residue stretch at 578-660 (VENSPLAHKT…ELLKEAGIEA (83 aa)) folds into the BRCT domain.

The protein belongs to the NAD-dependent DNA ligase family. LigA subfamily. The cofactor is Mg(2+). It depends on Mn(2+) as a cofactor.

It carries out the reaction NAD(+) + (deoxyribonucleotide)n-3'-hydroxyl + 5'-phospho-(deoxyribonucleotide)m = (deoxyribonucleotide)n+m + AMP + beta-nicotinamide D-nucleotide.. DNA ligase that catalyzes the formation of phosphodiester linkages between 5'-phosphoryl and 3'-hydroxyl groups in double-stranded DNA using NAD as a coenzyme and as the energy source for the reaction. It is essential for DNA replication and repair of damaged DNA. The chain is DNA ligase from Nitratiruptor sp. (strain SB155-2).